A 359-amino-acid chain; its full sequence is DNA replication and repair protein RecF (359 aa).

Residue 30–37 (GANGSGKT) coordinates ATP.

It belongs to the RecF family.

Its subcellular location is the cytoplasm. Its function is as follows. The RecF protein is involved in DNA metabolism; it is required for DNA replication and normal SOS inducibility. RecF binds preferentially to single-stranded, linear DNA. It also seems to bind ATP. This chain is DNA replication and repair protein RecF, found in Vibrio atlanticus (strain LGP32) (Vibrio splendidus (strain Mel32)).